We begin with the raw amino-acid sequence, 282 residues long: Bacterial lipoprotein FTN_1103 (282 aa).

The signal sequence occupies residues 1 to 28 (MKYGNLMMTKKKLLIGMVTISGIVILGS). Cys-29 carries N-palmitoyl cysteine lipidation. A lipid anchor (S-diacylglycerol cysteine) is attached at Cys-29.

The protein localises to the cell membrane. In terms of biological role, stimulates the host immune inflammatory signaling system allowing the host to combat the bacteria. Stimulates mouse interleukin-6 (Il6) production. In Francisella tularensis subsp. novicida (strain U112), this protein is Bacterial lipoprotein FTN_1103.